We begin with the raw amino-acid sequence, 890 residues long: Receptor like protein 23 (890 aa).

An N-terminal signal peptide occupies residues Met1–Ser22. Residues Ser23–Arg850 are Extracellular-facing. N-linked (GlcNAc...) asparagine glycosylation is found at Asn58, Asn70, Asn91, Asn109, and Asn145. LRR repeat units follow at residues Phe97–Asn121, Lys123–Asn145, Leu146–Lys171, Ile173–Leu195, His196–Asn218, His220–Leu243, Thr244–Asn268, Tyr270–Leu290, Pro291–Ser316, Leu318–Leu339, Ile340–Ser363, Leu364–Pro389, Thr391–Thr411, Leu412–Leu436, Leu438–Asn461, Ser462–Ile485, Gly487–Arg506, Ser507–Leu527, Arg528–Gly551, Ser553–Cys575, Ser577–Ala598, Leu599–Pro623, Phe626–Asn650, Leu699–Lys724, Leu726–Leu747, Glu748–Ile771, and Phe773–Gly796. N-linked (GlcNAc...) asparagine glycans are attached at residues Asn189, Asn207, Asn242, and Asn265. N-linked (GlcNAc...) asparagine glycosylation is present at Asn311. A glycan (N-linked (GlcNAc...) asparagine) is linked at Asn351. N-linked (GlcNAc...) asparagine glycosylation is present at Asn461. 2 N-linked (GlcNAc...) asparagine glycosylation sites follow: Asn505 and Asn518. A glycan (N-linked (GlcNAc...) asparagine) is linked at Asn574. N-linked (GlcNAc...) asparagine glycosylation occurs at Asn730. N-linked (GlcNAc...) asparagine glycosylation occurs at Asn778. Residues Ala851 to Ala871 form a helical membrane-spanning segment. Residues Ser872–Arg890 are Cytoplasmic-facing.

Belongs to the RLP family. In terms of assembly, directly interacts with a 20-mer fragment (nlp20) from NLPs through its extracellular LRR domain. Component of a trimeric complex composed of RLP23, SOBIR1 and BAK1. BAK1 is recruited into a pre-formed RLP23-SOBIR1 complex in a ligand-dependent manner. Interacts with SOBIR1.

Its subcellular location is the cell membrane. Its function is as follows. Involved in the perception of necrosis and ethylene-inducing peptide 1-like proteins (NLPs), that act as extracellular signals mediating immune activation. Component of the RLP23-SOBIR1-BAK1 complex that mediates NLP-triggered immunity. This chain is Receptor like protein 23, found in Arabidopsis thaliana (Mouse-ear cress).